A 207-amino-acid chain; its full sequence is Large ribosomal subunit protein uL4 (207 aa).

The segment at 49-78 is disordered; it reads HAVKNRSAVRGGGRKPWRQKGTGRARQGSI. Positions 60 to 71 are enriched in basic residues; sequence GGRKPWRQKGTG.

The protein belongs to the universal ribosomal protein uL4 family. Part of the 50S ribosomal subunit.

Its function is as follows. One of the primary rRNA binding proteins, this protein initially binds near the 5'-end of the 23S rRNA. It is important during the early stages of 50S assembly. It makes multiple contacts with different domains of the 23S rRNA in the assembled 50S subunit and ribosome. Forms part of the polypeptide exit tunnel. This chain is Large ribosomal subunit protein uL4, found in Latilactobacillus sakei subsp. sakei (strain 23K) (Lactobacillus sakei subsp. sakei).